A 77-amino-acid polypeptide reads, in one-letter code: Short neurotoxin OH-32 (77 aa).

A signal peptide spans 1–21 (MKNLLLTFLVVTIVCLDLGYT). Disulfide bonds link Cys-24/Cys-40, Cys-33/Cys-58, Cys-62/Cys-70, and Cys-71/Cys-76.

This sequence belongs to the three-finger toxin family. Short-chain subfamily. In terms of tissue distribution, expressed by the venom gland.

It is found in the secreted. Functionally, this three-finger toxin binds and inhibits the nicotinic acetylcholine receptor (nAChR). This is Short neurotoxin OH-32 from Ophiophagus hannah (King cobra).